Consider the following 1016-residue polypeptide: S-layer protein A (1016 aa).

Positions 1–30 (MDLSTKKVISAGLVFIYALSLAMLVPMFLA) are cleaved as a signal peptide.

The protein belongs to the Sulfolobales SlaA family. The mushroom-shaped unit cells of the Sulfolobales' S-layers may consist of three SlaB subunits and six SlaA subunits.

Its subcellular location is the secreted. The protein localises to the cell wall. The protein resides in the S-layer. S-layer large protein. May form the highly ordered outer sheath. In Acidianus ambivalens (Desulfurolobus ambivalens), this protein is S-layer protein A.